Here is a 957-residue protein sequence, read N- to C-terminus: Plasma membrane ATPase 1 (957 aa).

The Cytoplasmic segment spans residues 1–66; that stretch reads MGEEKPEVLD…EKKDSKLLKF (66 aa). A helical transmembrane segment spans residues 67–86; sequence LGFMWNPLSWVMEAAAIMAI. Over 87–98 the chain is Extracellular; sequence ALANGGGKPPDW. The chain crosses the membrane as a helical span at residues 99-119; the sequence is QDFVGIITLLIINSTISFIEE. Residues 120 to 248 are Cytoplasmic-facing; the sequence is NNAGNAAAAL…GHFQKVLTAI (129 aa). The helical transmembrane segment at 249 to 269 threads the bilayer; it reads GNFCICSIAVGMIIEIIVMYP. Over 270–279 the chain is Extracellular; it reads IQHRAYRPGI. Residues 280 to 301 form a helical membrane-spanning segment; it reads DNLLVLLIGGIPIAMPTVLSVT. Residues 302 to 648 lie on the Cytoplasmic side of the membrane; sequence MAIGSHRLAQ…TSRAIFQRMK (347 aa). The active-site 4-aspartylphosphate intermediate is D334. D593 and D597 together coordinate Mg(2+). Residues 649 to 670 form a helical membrane-spanning segment; it reads NYTIYAVSITIRIVLGFMLLAL. Topologically, residues 671 to 675 are extracellular; that stretch reads IWKFD. The helical transmembrane segment at 676-698 threads the bilayer; it reads FPPFMVLIIAILNDGTIMTISKD. Topologically, residues 699-714 are cytoplasmic; sequence RVKPSPLPDSWKLAEI. The chain crosses the membrane as a helical span at residues 715-735; it reads FTTGIVLGGYLAMMTVIFFWA. The Extracellular segment spans residues 736–760; it reads AYKTNFFPHVFGVSTLEKTATDDFR. The helical transmembrane segment at 761–781 threads the bilayer; it reads KLASAIYLQVSIISQALIFVT. The Cytoplasmic segment spans residues 782–793; the sequence is RSRSWSFVERPG. The helical transmembrane segment at 794-814 threads the bilayer; that stretch reads FLLVIAFVIAQLVATLIAVYA. Topologically, residues 815–823 are extracellular; the sequence is NWSFAAIEG. A helical membrane pass occupies residues 824-844; sequence IGWGWAGVIWIYNLVFYIPLD. At 845–957 the chain is on the cytoplasmic side; the sequence is IIKFFIRYAL…IETIQQAYTV (113 aa).

This sequence belongs to the cation transport ATPase (P-type) (TC 3.A.3) family. Type IIIA subfamily. Expressed in roots, stems, leaves from both vegetative and flowering plants, and flowers at early and late stages of development with highest expression levels found in flowers and stem.

It localises to the cell membrane. It catalyses the reaction ATP + H2O + H(+)(in) = ADP + phosphate + 2 H(+)(out). The plasma membrane ATPase of plants and fungi is a hydrogen ion pump. The proton gradient it generates drives the active transport of nutrients by H(+)-symport. The resulting external acidification and/or internal alkinization may mediate growth responses. The sequence is that of Plasma membrane ATPase 1 (PMA1) from Nicotiana plumbaginifolia (Leadwort-leaved tobacco).